Reading from the N-terminus, the 431-residue chain is Chaperone SurA (431 aa).

An N-terminal signal peptide occupies residues 1–20 (MKNWRTFILGLALCANGALA). 2 consecutive PpiC domains span residues 171–272 (GAEF…KVND) and 282–382 (VTEV…QLID).

The protein localises to the periplasm. It catalyses the reaction [protein]-peptidylproline (omega=180) = [protein]-peptidylproline (omega=0). Functionally, chaperone involved in the correct folding and assembly of outer membrane proteins. Recognizes specific patterns of aromatic residues and the orientation of their side chains, which are found more frequently in integral outer membrane proteins. May act in both early periplasmic and late outer membrane-associated steps of protein maturation. This Sodalis glossinidius (strain morsitans) protein is Chaperone SurA.